The primary structure comprises 65 residues: Sarcoplasmic/endoplasmic reticulum calcium ATPase regulator ARLN (65 aa).

Position 1 is an N-acetylmethionine (M1). Residues 1 to 36 (MEVSQAASGTDGVRERRGSFEAGRRNQDEAPQSGMN) form a disordered region. Residues 12 to 28 (GVRERRGSFEAGRRNQD) are compositionally biased toward basic and acidic residues. S19 is modified (phosphoserine). Residues 44-64 (WLDLWLFILFDLALFVFVYLL) traverse the membrane as a helical segment.

In terms of assembly, homooligomer. Can also form heterooligomers with other sarcoplasmic/endoplasmic reticulum calcium ATPase (SERCA) regulators ERLN, PLN, SLN and STRIT1/DWORF. Monomer. Interacts as a monomer with ATP2A2/SERCA2; the interaction results in inhibition of ATP2A2 Ca(2+) affinity. In the embryo, expressed in heart, epidermal epithelium, salivary gland, brown fat, intestinal epithelium and bladder urothelium.

Its subcellular location is the endoplasmic reticulum membrane. Its function is as follows. Inhibits the activity of the calcium ATPases ATP2A2/SERCA2 and ATP2A3/SERCA3 by decreasing their apparent affinity for Ca(2+). The chain is Sarcoplasmic/endoplasmic reticulum calcium ATPase regulator ARLN (Arln) from Mus musculus (Mouse).